Here is a 900-residue protein sequence, read N- to C-terminus: Alanine--tRNA ligase (900 aa).

Zn(2+)-binding residues include His604, His608, Cys708, and His712.

This sequence belongs to the class-II aminoacyl-tRNA synthetase family. The cofactor is Zn(2+).

It is found in the cytoplasm. The catalysed reaction is tRNA(Ala) + L-alanine + ATP = L-alanyl-tRNA(Ala) + AMP + diphosphate. Functionally, catalyzes the attachment of alanine to tRNA(Ala) in a two-step reaction: alanine is first activated by ATP to form Ala-AMP and then transferred to the acceptor end of tRNA(Ala). Also edits incorrectly charged Ser-tRNA(Ala) and Gly-tRNA(Ala) via its editing domain. The chain is Alanine--tRNA ligase from Saccharolobus islandicus (strain L.S.2.15 / Lassen #1) (Sulfolobus islandicus).